The chain runs to 850 residues: Receptor-like protein kinase ANXUR1 (850 aa).

Positions 1–26 are cleaved as a signal peptide; the sequence is MSGKTRILFFLTCLSFLLVFPTRSNG. Topologically, residues 27 to 429 are extracellular; the sequence is QDLALSCGTS…KKEFKNEKRH (403 aa). 5 N-linked (GlcNAc...) asparagine glycosylation sites follow: Asn-114, Asn-132, Asn-292, Asn-302, and Asn-330. Residues 430–450 form a helical membrane-spanning segment; that stretch reads AFIIGSAGGVLAVLIGALCFT. Residues 451–850 lie on the Cytoplasmic side of the membrane; it reads AYKKKQGYQG…FSQIVNPKGR (400 aa). One can recognise a Protein kinase domain in the interval 517–790; that stretch reads FDDSNVIGVG…GDVLWNLEFA (274 aa). ATP is bound by residues 523 to 531 and Lys-545; that span reads IGVGGFGKV. Asp-641 serves as the catalytic Proton acceptor. A disordered region spans residues 796-850; that stretch reads TADGTRHRTPNNGGSSEDLGRGGMAVNVAGRDDVSDLSSEDNTEIFSQIVNPKGR. The segment covering 839-850 has biased composition (polar residues); sequence EIFSQIVNPKGR.

Belongs to the protein kinase superfamily. Ser/Thr protein kinase family. Expressed in pollen, but not in pistils or seedlings.

It localises to the cell membrane. It carries out the reaction L-seryl-[protein] + ATP = O-phospho-L-seryl-[protein] + ADP + H(+). It catalyses the reaction L-threonyl-[protein] + ATP = O-phospho-L-threonyl-[protein] + ADP + H(+). Functionally, receptor-like protein kinase that controls pollen tube behavior by directing rupture at proper timing to release the sperm cell. The sequence is that of Receptor-like protein kinase ANXUR1 (ANX1) from Arabidopsis thaliana (Mouse-ear cress).